Reading from the N-terminus, the 279-residue chain is Glycerol uptake facilitator protein (279 aa).

At 1-8 (MTTAAPTP) the chain is on the cytoplasmic side. A helical membrane pass occupies residues 9-37 (SLFGQCLAEFLGTALLIFFGTGCVAALKV). The Periplasmic portion of the chain corresponds to 38-42 (AGASF). A helical membrane pass occupies residues 43–63 (GLWEISIIWGVGVSMAIYLSA). Residues 64–66 (GVS) are Cytoplasmic-facing. An intramembrane segment occupies 67-70 (GAHL). Residues 71–73 (NPA) carry the NPA 1 motif. The helical intramembrane region spans 71–81 (NPAVSIALWLF). The Cytoplasmic segment spans residues 82–87 (AGFEGR). A helical transmembrane segment spans residues 88-111 (KLPFYITAQVAGAFCAAALVYTLY). Residues 112–146 (SSLFIEFEQAQNIVRGSQDSLALASVFSTYPHPAL) lie on the Periplasmic side of the membrane. A helical membrane pass occupies residues 147–172 (SVGQAFLVEVVITAILMAVIMALTDD). Residues 173–180 (GNGLPRGP) are Cytoplasmic-facing. A helical transmembrane segment spans residues 181 to 197 (LAPLLIGLLIAVIGSAM). Residues 198 to 201 (GPLT) are Periplasmic-facing. Residues 202–205 (GFAM) lie within the membrane without spanning it. The NPA 2 signature appears at 206 to 208 (NPA). The segment at residues 206-219 (NPARDFGPKLMTYL) is an intramembrane region (helical). Residues 220–234 (AGWGPIAFTGGREIP) are Periplasmic-facing. Residues 235–257 (YFLVPIFAPILGACLGAGGYRVL) traverse the membrane as a helical segment. Topologically, residues 258-279 (IARHLPSAAAPAEAEPEKVRAS) are cytoplasmic.

It belongs to the MIP/aquaporin (TC 1.A.8) family.

It localises to the cell inner membrane. The enzyme catalyses glycerol(in) = glycerol(out). Mediates glycerol diffusion across the cytoplasmic membrane via a pore-type mechanism. This chain is Glycerol uptake facilitator protein (glpF), found in Pseudomonas aeruginosa (strain ATCC 15692 / DSM 22644 / CIP 104116 / JCM 14847 / LMG 12228 / 1C / PRS 101 / PAO1).